Here is a 198-residue protein sequence, read N- to C-terminus: UPF0098 protein PH1269 (198 aa).

This sequence belongs to the UPF0098 family.

The protein is UPF0098 protein PH1269 of Pyrococcus horikoshii (strain ATCC 700860 / DSM 12428 / JCM 9974 / NBRC 100139 / OT-3).